The primary structure comprises 132 residues: DNA-directed RNA polymerase subunit omega (132 aa).

Residues S90–D109 are disordered.

Belongs to the RNA polymerase subunit omega family. In terms of assembly, the RNAP catalytic core consists of 2 alpha, 1 beta, 1 beta' and 1 omega subunit. When a sigma factor is associated with the core the holoenzyme is formed, which can initiate transcription.

The enzyme catalyses RNA(n) + a ribonucleoside 5'-triphosphate = RNA(n+1) + diphosphate. Functionally, promotes RNA polymerase assembly. Latches the N- and C-terminal regions of the beta' subunit thereby facilitating its interaction with the beta and alpha subunits. The polypeptide is DNA-directed RNA polymerase subunit omega (Bartonella henselae (strain ATCC 49882 / DSM 28221 / CCUG 30454 / Houston 1) (Rochalimaea henselae)).